The sequence spans 664 residues: Sorbicillinoid biosynthetic cluster transcription factor sor3 (664 aa).

Positions C40–C67 form a DNA-binding region, zn(2)-C6 fungal-type. Residues S68–E102 form a disordered region.

It is found in the nucleus. In terms of biological role, transcription factor that acts in concert with sor4 which is a transcriptional activator of the gene cluster that mediates the biosynthesis of sorbicillinoids, a diverse group of yellow secondary metabolites that restrict growth of competing pathogenic fungi but not of bacteria. Regulates the cluster genes in a light dependent manner. Also plays a direct or indirect role in regulation of paracelsin biosynthesis and cellulase gene expression. The polypeptide is Sorbicillinoid biosynthetic cluster transcription factor sor3 (Hypocrea jecorina (strain QM6a) (Trichoderma reesei)).